The sequence spans 75 residues: ATP synthase subunit c (75 aa).

A run of 2 helical transmembrane segments spans residues 4–24 and 54–74; these read GLIA…GLGQ and AVAE…MFAF.

It belongs to the ATPase C chain family. In terms of assembly, F-type ATPases have 2 components, F(1) - the catalytic core - and F(0) - the membrane proton channel. F(1) has five subunits: alpha(3), beta(3), gamma(1), delta(1), epsilon(1). F(0) has three main subunits: a(1), b(2) and c(10-14). The alpha and beta chains form an alternating ring which encloses part of the gamma chain. F(1) is attached to F(0) by a central stalk formed by the gamma and epsilon chains, while a peripheral stalk is formed by the delta and b chains.

Its subcellular location is the cell membrane. In terms of biological role, f(1)F(0) ATP synthase produces ATP from ADP in the presence of a proton or sodium gradient. F-type ATPases consist of two structural domains, F(1) containing the extramembraneous catalytic core and F(0) containing the membrane proton channel, linked together by a central stalk and a peripheral stalk. During catalysis, ATP synthesis in the catalytic domain of F(1) is coupled via a rotary mechanism of the central stalk subunits to proton translocation. Key component of the F(0) channel; it plays a direct role in translocation across the membrane. A homomeric c-ring of between 10-14 subunits forms the central stalk rotor element with the F(1) delta and epsilon subunits. The chain is ATP synthase subunit c from Mycoplasmopsis agalactiae (strain NCTC 10123 / CIP 59.7 / PG2) (Mycoplasma agalactiae).